The primary structure comprises 185 residues: Ribosome-recycling factor (185 aa).

Belongs to the RRF family.

The protein localises to the cytoplasm. Functionally, responsible for the release of ribosomes from messenger RNA at the termination of protein biosynthesis. May increase the efficiency of translation by recycling ribosomes from one round of translation to another. This Clostridioides difficile (strain 630) (Peptoclostridium difficile) protein is Ribosome-recycling factor.